Consider the following 254-residue polypeptide: PF03932 family protein CutC (254 aa).

The protein belongs to the CutC family.

Its subcellular location is the cytoplasm. This Yersinia pseudotuberculosis serotype O:1b (strain IP 31758) protein is PF03932 family protein CutC.